We begin with the raw amino-acid sequence, 208 residues long: MAKYNDAKCRMCRREGTKLFLKGDRCYTDKCAYDRRPYAPGQHGRARKKVSDYAVQLREKQKVRRVYGVLERQFRGYFHKADMAKGVTGANLLAILERRLDNVIYRLGFANSRQQARQLVRHGIFTLNGRKANIPSMQVRVGDIIEVPEASRKIPVIAEAQEVIARRGCPSWLEVDGPSFKGTVKALPQREDIQFPINEHLIVELYSK.

The 64-residue stretch at Arg98–Gln161 folds into the S4 RNA-binding domain.

This sequence belongs to the universal ribosomal protein uS4 family. In terms of assembly, part of the 30S ribosomal subunit. Contacts protein S5. The interaction surface between S4 and S5 is involved in control of translational fidelity.

Functionally, one of the primary rRNA binding proteins, it binds directly to 16S rRNA where it nucleates assembly of the body of the 30S subunit. Its function is as follows. With S5 and S12 plays an important role in translational accuracy. This is Small ribosomal subunit protein uS4 from Nitratidesulfovibrio vulgaris (strain DSM 19637 / Miyazaki F) (Desulfovibrio vulgaris).